Consider the following 385-residue polypeptide: Glucans biosynthesis protein C (385 aa).

A run of 10 helical transmembrane segments spans residues 17–37 (AWLMLLGIPFHISLIYSSHTW), 60–80 (MQVFFVISGYFSYMLFLRYPL), 91–111 (VGIPMLTAIPLLTLPQFIMLQ), 137–157 (ISHLWFLLVLVVMTTLCVWIF), 173–193 (KFSMVKLSVIFLCLGIGYAVI), 212–232 (FIVMQTLFYLPFFILGALAFI), 239–259 (LFTTPSRGCTLAAALAFVAYL), 274–294 (TESVITMVLGLWMVNVVFSFG), 311–331 (ASLFIYLVHHPLTLFFGAYIT), and 338–358 (WLGFLCGLIFVVGIAIILYEI).

Belongs to the acyltransferase 3 family. OpgC subfamily.

It is found in the cell membrane. It functions in the pathway glycan metabolism; osmoregulated periplasmic glucan (OPG) biosynthesis. In terms of biological role, necessary for the succinyl substitution of periplasmic glucans. Could catalyze the transfer of succinyl residues from the cytoplasmic side of the membrane to the nascent glucan backbones on the periplasmic side of the membrane. The sequence is that of Glucans biosynthesis protein C from Shigella sonnei (strain Ss046).